We begin with the raw amino-acid sequence, 289 residues long: ATP synthase gamma chain (289 aa).

The protein belongs to the ATPase gamma chain family. F-type ATPases have 2 components, CF(1) - the catalytic core - and CF(0) - the membrane proton channel. CF(1) has five subunits: alpha(3), beta(3), gamma(1), delta(1), epsilon(1). CF(0) has three main subunits: a, b and c.

The protein resides in the cell inner membrane. Its function is as follows. Produces ATP from ADP in the presence of a proton gradient across the membrane. The gamma chain is believed to be important in regulating ATPase activity and the flow of protons through the CF(0) complex. The protein is ATP synthase gamma chain of Coxiella burnetii (strain Dugway 5J108-111).